The sequence spans 178 residues: FMN reductase (NADH) RutF (178 aa).

It belongs to the non-flavoprotein flavin reductase family. RutF subfamily.

The enzyme catalyses FMNH2 + NAD(+) = FMN + NADH + 2 H(+). Catalyzes the reduction of FMN to FMNH2 which is used to reduce pyrimidine by RutA via the Rut pathway. The protein is FMN reductase (NADH) RutF of Pseudomonas syringae pv. syringae (strain B728a).